A 1487-amino-acid chain; its full sequence is Probable lysine-specific demethylase SE14 (1487 aa).

The disordered stretch occupies residues 1 to 23 (MPPQPPPAASASASAPDPAVPAW). Over residues 9 to 22 (ASASASAPDPAVPA) the composition is skewed to low complexity. The JmjN domain occupies 30–71 (APEYRPTESEFADPIAFLSRVEREAAAYGICKVIPPHPRPSR). Residues 86–104 (CDAPAPSPAAASDSSIPPS) are compositionally biased toward low complexity. The tract at residues 86–113 (CDAPAPSPAAASDSSIPPSSSSPPPVSA) is disordered. The JmjC domain maps to 232-398 (NSPWNLQAIA…FAKEAAVRRA (167 aa)). Positions 275, 277, and 366 each coordinate Fe cation. Disordered stretches follow at residues 494-555 (SCSK…DDGD) and 684-718 (YGDTETPEKKIPSDCPGSELSKQSGRGDVNVPDVE). Composition is skewed to basic and acidic residues over residues 498 to 507 (APEKKGEDGP) and 542 to 551 (QAPEGEKLDT). Residues 1377–1400 (FQCDIEFCDMTFETKAELRAHQRN) form a C2H2-type 1; degenerate zinc finger. C2H2-type zinc fingers lie at residues 1400–1424 (NICTDESCGKRFSSHKYLKRHQCVH), 1430–1454 (FKCPWDGCPMTFKWLWAQTEHIRVH), and 1460–1486 (YKCSAPDCGQSFRYVSDYSRHRKKFNH).

It depends on Fe(2+) as a cofactor.

It is found in the nucleus. Histone demethylase that demethylates 'Lys-4' (H3K4me) of histone H3. Involved in the control of flowering time. Has a suppressive effect on floral transition under long day conditions through the demethylation of H3K4me3 in the promoter region of the flower-promoting signal HD3B/RFT1. In Oryza sativa subsp. japonica (Rice), this protein is Probable lysine-specific demethylase SE14 (SE14).